We begin with the raw amino-acid sequence, 1748 residues long: WD repeat-containing protein 90 (1748 aa).

A binds with microtubules region spans residues 1–207 (MARAWQHPFL…VTPMPREMAF (207 aa)). At S241 the chain carries Phosphoserine. Residues 274-308 (QTPSPTASGRAALAPRPFPEVSLSQERSDASNADG) are disordered. 21 WD repeats span residues 407 to 450 (GHTD…CLFR), 452 to 494 (PMHV…LGGE), 501 to 541 (AHTD…LRSC), 615 to 654 (SSGP…VLLE), 656 to 695 (EHEG…YHML), 698 to 737 (SHTA…QLYD), 740 to 779 (SSED…VLVE), 782 to 821 (CHRG…WHVL), 882 to 922 (SRLD…IIRE), 926 to 964 (VHPE…SPGP), 969 to 1009 (GHSE…QSFP), 1156 to 1201 (GHSA…CQHL), 1204 to 1245 (PHST…LVSS), 1247 to 1286 (RLPE…ADIS), 1298 to 1326 (VGAG…VCVW), 1327 to 1376 (DTRA…ELRC), 1433 to 1472 (GHRS…LVIQ), 1475 to 1520 (VLNQ…MELK), 1523 to 1562 (PHPV…TFRV), 1568 to 1614 (GAPI…NHCE), and 1715 to 1748 (GHDN…VPGL). The interval 1004–1071 (SDQSFPGAPP…GARDTRNSGA (68 aa)) is disordered.

Belongs to the WD repeat WDR90/POC16 family.

It localises to the cytoplasm. It is found in the cytoskeleton. The protein resides in the microtubule organizing center. Its subcellular location is the centrosome. The protein localises to the centriole. It localises to the centriolar satellite. Microtubule-binding protein that plays a crucial role in ensuring inner core protein localization within the centriole core, as well as in maintaining the microtubule wall integrity and the overall centriole roundness and stability. Required for efficient primary cilium formation. This chain is WD repeat-containing protein 90 (WDR90), found in Homo sapiens (Human).